Here is a 472-residue protein sequence, read N- to C-terminus: Adenosylhomocysteinase (472 aa).

Substrate contacts are provided by threonine 62, aspartate 137, and glutamate 197. An NAD(+)-binding site is contributed by 198-200 (TTT). Substrate-binding residues include lysine 227 and aspartate 231. NAD(+) contacts are provided by residues asparagine 232, 261-266 (GYGDVG), glutamate 284, asparagine 319, 340-342 (IGH), and asparagine 385.

The protein belongs to the adenosylhomocysteinase family. Requires NAD(+) as cofactor.

The protein resides in the cytoplasm. The enzyme catalyses S-adenosyl-L-homocysteine + H2O = L-homocysteine + adenosine. It functions in the pathway amino-acid biosynthesis; L-homocysteine biosynthesis; L-homocysteine from S-adenosyl-L-homocysteine: step 1/1. In terms of biological role, may play a key role in the regulation of the intracellular concentration of adenosylhomocysteine. This chain is Adenosylhomocysteinase, found in Bordetella pertussis (strain Tohama I / ATCC BAA-589 / NCTC 13251).